A 556-amino-acid chain; its full sequence is Guanosine-diphosphatase (556 aa).

Residues Met-1–Lys-12 are Cytoplasmic-facing. Residues Ala-13–Gly-33 form a helical; Signal-anchor for type II membrane protein membrane-spanning segment. At Ser-34 to Ile-556 the chain is on the lumenal side. Glu-256 functions as the Proton acceptor in the catalytic mechanism. The N-linked (GlcNAc...) asparagine glycan is linked to Asn-372.

Belongs to the GDA1/CD39 NTPase family. The cofactor is Ca(2+). It depends on Mn(2+) as a cofactor.

The protein resides in the golgi apparatus membrane. The catalysed reaction is GDP + H2O = GMP + phosphate + H(+). The protein operates within protein modification; protein glycosylation. Its function is as follows. After transfer of sugars to endogenous macromolecular acceptors, the enzyme converts nucleoside diphosphates to nucleoside monophosphates which in turn exit the Golgi lumen in a coupled antiporter reaction, allowing entry of additional nucleotide sugar from the cytosol. The sequence is that of Guanosine-diphosphatase (gdp1) from Schizosaccharomyces pombe (strain 972 / ATCC 24843) (Fission yeast).